We begin with the raw amino-acid sequence, 122 residues long: Phosphoribosyl-ATP pyrophosphatase (122 aa).

Belongs to the PRA-PH family.

The protein localises to the cytoplasm. The enzyme catalyses 1-(5-phospho-beta-D-ribosyl)-ATP + H2O = 1-(5-phospho-beta-D-ribosyl)-5'-AMP + diphosphate + H(+). Its pathway is amino-acid biosynthesis; L-histidine biosynthesis; L-histidine from 5-phospho-alpha-D-ribose 1-diphosphate: step 2/9. The chain is Phosphoribosyl-ATP pyrophosphatase from Cupriavidus metallidurans (strain ATCC 43123 / DSM 2839 / NBRC 102507 / CH34) (Ralstonia metallidurans).